Here is a 172-residue protein sequence, read N- to C-terminus: Protein-export protein SecB (172 aa).

The protein belongs to the SecB family. As to quaternary structure, homotetramer, a dimer of dimers. One homotetramer interacts with 1 SecA dimer.

It is found in the cytoplasm. One of the proteins required for the normal export of preproteins out of the cell cytoplasm. It is a molecular chaperone that binds to a subset of precursor proteins, maintaining them in a translocation-competent state. It also specifically binds to its receptor SecA. The polypeptide is Protein-export protein SecB (Dinoroseobacter shibae (strain DSM 16493 / NCIMB 14021 / DFL 12)).